The chain runs to 413 residues: Tyrosine--tRNA ligase (413 aa).

Y34 contributes to the L-tyrosine binding site. The 'HIGH' region signature appears at 39–48 (CTAQSLHVGN). Residues Y171 and Q175 each contribute to the L-tyrosine site. A 'KMSKS' region motif is present at residues 231–235 (KMGKT). ATP is bound at residue K234. One can recognise an S4 RNA-binding domain in the interval 346 to 411 (IPITELLVTI…GKKCHILVKI (66 aa)).

Belongs to the class-I aminoacyl-tRNA synthetase family. TyrS type 1 subfamily. As to quaternary structure, homodimer.

Its subcellular location is the cytoplasm. The enzyme catalyses tRNA(Tyr) + L-tyrosine + ATP = L-tyrosyl-tRNA(Tyr) + AMP + diphosphate + H(+). Functionally, catalyzes the attachment of tyrosine to tRNA(Tyr) in a two-step reaction: tyrosine is first activated by ATP to form Tyr-AMP and then transferred to the acceptor end of tRNA(Tyr). The protein is Tyrosine--tRNA ligase of Orientia tsutsugamushi (strain Boryong) (Rickettsia tsutsugamushi).